Here is a 144-residue protein sequence, read N- to C-terminus: Transmembrane protein 170A (144 aa).

Residues 1 to 50 are Extracellular-facing; the sequence is MEREGSGGGGGSAGLLQQILSLKLVPRVGNGTLCPNSTSLCSFPEMWYGV. 2 N-linked (GlcNAc...) asparagine glycosylation sites follow: N30 and N36. Residues 51-71 form a helical membrane-spanning segment; it reads FLWALMSSVFFHVPAGLLALF. The Cytoplasmic segment spans residues 72 to 85; it reads TLRHHKYGRFMSVS. Residues 86 to 106 form a helical membrane-spanning segment; that stretch reads ILLMGIVGPITAGILTSAAIA. Residues 107-116 lie on the Extracellular side of the membrane; that stretch reads GVYRAAGKEM. Residues 117 to 137 form a helical membrane-spanning segment; that stretch reads IPFEALTLGTGQTFCVVVVSF. The Cytoplasmic portion of the chain corresponds to 138–144; sequence LRVLATL.

The protein belongs to the TMEM170 family. Interacts with RTN4.

The protein resides in the endoplasmic reticulum membrane. Its subcellular location is the nucleus envelope. In terms of biological role, acts as a regulator of endoplasmic reticulum (ER) and nuclear envelope (NE) morphogenesis. Affects the ratio between tubular ER and ER sheets by promoting sheet formation at the expense of tubules. Influences NE expansion, nuclear pore complex formation and proper localization of inner nuclear membrane proteins. This chain is Transmembrane protein 170A (Tmem170a), found in Mus musculus (Mouse).